The following is a 362-amino-acid chain: Probable branched-chain-amino-acid aminotransferase (362 aa).

Lysine 202 carries the N6-(pyridoxal phosphate)lysine modification.

This sequence belongs to the class-IV pyridoxal-phosphate-dependent aminotransferase family. Pyridoxal 5'-phosphate is required as a cofactor.

The catalysed reaction is L-leucine + 2-oxoglutarate = 4-methyl-2-oxopentanoate + L-glutamate. It carries out the reaction L-isoleucine + 2-oxoglutarate = (S)-3-methyl-2-oxopentanoate + L-glutamate. It catalyses the reaction L-valine + 2-oxoglutarate = 3-methyl-2-oxobutanoate + L-glutamate. It functions in the pathway amino-acid biosynthesis; L-isoleucine biosynthesis; L-isoleucine from 2-oxobutanoate: step 4/4. Its pathway is amino-acid biosynthesis; L-leucine biosynthesis; L-leucine from 3-methyl-2-oxobutanoate: step 4/4. It participates in amino-acid biosynthesis; L-valine biosynthesis; L-valine from pyruvate: step 4/4. In terms of biological role, acts on leucine, isoleucine and valine. The protein is Probable branched-chain-amino-acid aminotransferase (ilvE) of Streptomyces coelicolor (strain ATCC BAA-471 / A3(2) / M145).